The following is a 261-amino-acid chain: Segregation and condensation protein A (261 aa).

This sequence belongs to the ScpA family. As to quaternary structure, component of a cohesin-like complex composed of ScpA, ScpB and the Smc homodimer, in which ScpA and ScpB bind to the head domain of Smc. The presence of the three proteins is required for the association of the complex with DNA.

It localises to the cytoplasm. Its function is as follows. Participates in chromosomal partition during cell division. May act via the formation of a condensin-like complex containing Smc and ScpB that pull DNA away from mid-cell into both cell halves. This chain is Segregation and condensation protein A, found in Desulfitobacterium hafniense (strain DSM 10664 / DCB-2).